Here is a 533-residue protein sequence, read N- to C-terminus: Glucose-6-phosphate isomerase (533 aa).

Glu-322 (proton donor) is an active-site residue. Catalysis depends on residues His-351 and Lys-455.

Belongs to the GPI family.

The protein localises to the cytoplasm. The enzyme catalyses alpha-D-glucose 6-phosphate = beta-D-fructose 6-phosphate. Its pathway is carbohydrate biosynthesis; gluconeogenesis. The protein operates within carbohydrate degradation; glycolysis; D-glyceraldehyde 3-phosphate and glycerone phosphate from D-glucose: step 2/4. In terms of biological role, catalyzes the reversible isomerization of glucose-6-phosphate to fructose-6-phosphate. The sequence is that of Glucose-6-phosphate isomerase from Desulfitobacterium hafniense (strain DSM 10664 / DCB-2).